The sequence spans 1037 residues: Mediator of RNA polymerase II transcription subunit 14 (1037 aa).

Belongs to the Mediator complex subunit 14 family. In terms of assembly, component of the Mediator complex.

The protein resides in the nucleus. Its function is as follows. Component of the Mediator complex, a coactivator involved in the regulated transcription of nearly all RNA polymerase II-dependent genes. Mediator functions as a bridge to convey information from gene-specific regulatory proteins to the basal RNA polymerase II transcription machinery. Mediator is recruited to promoters by direct interactions with regulatory proteins and serves as a scaffold for the assembly of a functional preinitiation complex with RNA polymerase II and the general transcription factors. The chain is Mediator of RNA polymerase II transcription subunit 14 (RGR1) from Candida glabrata (strain ATCC 2001 / BCRC 20586 / JCM 3761 / NBRC 0622 / NRRL Y-65 / CBS 138) (Yeast).